The sequence spans 53 residues: uncharacterized protein (53 aa).

The helical transmembrane segment at C26–F46 threads the bilayer.

The protein belongs to the plectrovirus ORF11 family.

It is found in the host membrane. This is an uncharacterized protein from Spiroplasma virus SpV1-R8A2 B (SpV1).